We begin with the raw amino-acid sequence, 97 residues long: Large ribosomal subunit protein uL23 (97 aa).

The protein belongs to the universal ribosomal protein uL23 family. As to quaternary structure, part of the 50S ribosomal subunit. Contacts protein L29, and trigger factor when it is bound to the ribosome.

One of the early assembly proteins it binds 23S rRNA. One of the proteins that surrounds the polypeptide exit tunnel on the outside of the ribosome. Forms the main docking site for trigger factor binding to the ribosome. The polypeptide is Large ribosomal subunit protein uL23 (Sinorhizobium medicae (strain WSM419) (Ensifer medicae)).